We begin with the raw amino-acid sequence, 296 residues long: Protoheme IX farnesyltransferase (296 aa).

The Cytoplasmic portion of the chain corresponds to methionine 1–valine 9. A helical transmembrane segment spans residues threonine 10–leucine 28. Residues alanine 29–proline 37 are Periplasmic-facing. The helical transmembrane segment at leucine 38–phenylalanine 56 threads the bilayer. Topologically, residues asparagine 57 to lysine 78 are cytoplasmic. The chain crosses the membrane as a helical span at residues glycine 79–glycine 97. Topologically, residues phenylalanine 98 to proline 107 are periplasmic. Residues leucine 108 to leucine 126 form a helical membrane-spanning segment. Topologically, residues tyrosine 127–proline 197 are cytoplasmic. Residues valine 198 to phenylalanine 216 form a helical membrane-spanning segment. At alanine 217–tyrosine 228 the chain is on the periplasmic side. Residues alanine 229 to methionine 247 traverse the membrane as a helical segment. The Cytoplasmic segment spans residues alanine 248–serine 268. The helical transmembrane segment at isoleucine 269 to asparagine 287 threads the bilayer. Topologically, residues serine 288 to tryptophan 296 are periplasmic.

Belongs to the UbiA prenyltransferase family. Protoheme IX farnesyltransferase subfamily.

The protein localises to the cell inner membrane. The enzyme catalyses heme b + (2E,6E)-farnesyl diphosphate + H2O = Fe(II)-heme o + diphosphate. It participates in porphyrin-containing compound metabolism; heme O biosynthesis; heme O from protoheme: step 1/1. In terms of biological role, converts heme B (protoheme IX) to heme O by substitution of the vinyl group on carbon 2 of heme B porphyrin ring with a hydroxyethyl farnesyl side group. This chain is Protoheme IX farnesyltransferase, found in Salmonella typhimurium (strain LT2 / SGSC1412 / ATCC 700720).